Here is a 227-residue protein sequence, read N- to C-terminus: Leucyl/phenylalanyl-tRNA--protein transferase (227 aa).

It belongs to the L/F-transferase family.

Its subcellular location is the cytoplasm. The enzyme catalyses N-terminal L-lysyl-[protein] + L-leucyl-tRNA(Leu) = N-terminal L-leucyl-L-lysyl-[protein] + tRNA(Leu) + H(+). It catalyses the reaction N-terminal L-arginyl-[protein] + L-leucyl-tRNA(Leu) = N-terminal L-leucyl-L-arginyl-[protein] + tRNA(Leu) + H(+). It carries out the reaction L-phenylalanyl-tRNA(Phe) + an N-terminal L-alpha-aminoacyl-[protein] = an N-terminal L-phenylalanyl-L-alpha-aminoacyl-[protein] + tRNA(Phe). Functionally, functions in the N-end rule pathway of protein degradation where it conjugates Leu, Phe and, less efficiently, Met from aminoacyl-tRNAs to the N-termini of proteins containing an N-terminal arginine or lysine. This Desulfotalea psychrophila (strain LSv54 / DSM 12343) protein is Leucyl/phenylalanyl-tRNA--protein transferase.